The chain runs to 391 residues: Solute carrier family 35 member F2 (391 aa).

Transmembrane regions (helical) follow at residues 39-59 (MLLS…IRLT), 73-93 (LFQS…TLAV), 108-128 (WWKY…VVKA), 137-157 (IQLL…FFLL), 165-185 (FIGA…DVLM), 200-220 (LIGD…SVCQ), 230-250 (VELL…QLAI), 267-287 (LLYV…PVVI), 294-314 (AINL…LFLF), and 318-338 (FSGL…FYFS). Residues 361–391 (VELPSSGQLEPSVTYTSLSQETEEEPRVRVA) are disordered. Positions 365–380 (SSGQLEPSVTYTSLSQ) are enriched in polar residues.

It belongs to the SLC35F solute transporter family.

The protein localises to the membrane. Functionally, putative solute transporter. The sequence is that of Solute carrier family 35 member F2 (slc35f2) from Xenopus tropicalis (Western clawed frog).